Here is a 128-residue protein sequence, read N- to C-terminus: Large ribosomal subunit protein uL18 (128 aa).

The protein belongs to the universal ribosomal protein uL18 family. As to quaternary structure, part of the 50S ribosomal subunit; part of the 5S rRNA/L5/L18/L25 subcomplex. Contacts the 5S and 23S rRNAs.

Its function is as follows. This is one of the proteins that bind and probably mediate the attachment of the 5S RNA into the large ribosomal subunit, where it forms part of the central protuberance. The chain is Large ribosomal subunit protein uL18 from Acidothermus cellulolyticus (strain ATCC 43068 / DSM 8971 / 11B).